An 80-amino-acid polypeptide reads, in one-letter code: D-alanyl carrier protein 1 (80 aa).

Positions 1–80 (MTMDDTKATV…KIVAKVENLQ (80 aa)) constitute a Carrier domain. S38 bears the O-(pantetheine 4'-phosphoryl)serine mark.

It belongs to the DltC family. 4'-phosphopantetheine is transferred from CoA to a specific serine of apo-DCP.

It localises to the cytoplasm. It functions in the pathway cell wall biogenesis; lipoteichoic acid biosynthesis. Functionally, carrier protein involved in the D-alanylation of lipoteichoic acid (LTA). The loading of thioester-linked D-alanine onto DltC is catalyzed by D-alanine--D-alanyl carrier protein ligase DltA. The DltC-carried D-alanyl group is further transferred to cell membrane phosphatidylglycerol (PG) by forming an ester bond, probably catalyzed by DltD. D-alanylation of LTA plays an important role in modulating the properties of the cell wall in Gram-positive bacteria, influencing the net charge of the cell wall. The protein is D-alanyl carrier protein 1 of Lactiplantibacillus plantarum (strain ATCC BAA-793 / NCIMB 8826 / WCFS1) (Lactobacillus plantarum).